Reading from the N-terminus, the 744-residue chain is CCR4-NOT transcription complex subunit 10 (744 aa).

Positions 1–16 are enriched in basic and acidic residues; sequence MAADKPADQGAEKHEG. The interval 1–25 is disordered; the sequence is MAADKPADQGAEKHEGTGQSSGITD. Ala-2 carries the post-translational modification N-acetylalanine. The stretch at 74 to 107 forms a coiled coil; it reads KSNQTTTDNLRQTLNQLKNQVHSAVEEMDGLDDV. Residues 183–199 show a composition bias toward low complexity; sequence NNNKNGKNETGNNNNKD. Disordered stretches follow at residues 183–204, 477–521, and 602–634; these read NNNK…SNHK, QDPK…PPSS, and VSLG…PQCY. Residues 484–495 are compositionally biased toward polar residues; the sequence is GAKNSNQLGGNT. A compositionally biased stretch (low complexity) spans 496–506; sequence ESSESSETCSS. Residues 602–612 show a composition bias toward polar residues; it reads VSLGISSNEQD.

It belongs to the CNOT10 family. Component of the CCR4-NOT complex; distinct complexes seem to exist that differ in the participation of probably mutually exclusive catalytic subunits. CNOT10 and CNOT11 form a subcomplex docked to the CNOT1 scaffold.

Its subcellular location is the cytoplasm. The protein localises to the nucleus. In terms of biological role, component of the CCR4-NOT complex which is one of the major cellular mRNA deadenylases and is linked to various cellular processes including bulk mRNA degradation, miRNA-mediated repression, translational repression during translational initiation and general transcription regulation. Additional complex functions may be a consequence of its influence on mRNA expression. Is not required for association of CNOT7 to the CCR4-NOT complex. This chain is CCR4-NOT transcription complex subunit 10 (CNOT10), found in Macaca fascicularis (Crab-eating macaque).